The chain runs to 410 residues: Mitochondrial potassium channel (410 aa).

A mitochondrion-targeting transit peptide spans 1–35 (MTGCSPVFTMQQVVGVSHRLVWRTFRGTDLLMTRT). Residues 36–201 (LCSPGPSRPG…KERTRAERTK (166 aa)) lie on the Mitochondrial matrix side of the membrane. Residues 116-143 (VREAREDLEAQQTKLKEVRDRLDRVSRE) adopt a coiled-coil conformation. Residues 202-222 (NWSLIGSVLGALIGVAGSTYV) traverse the membrane as a helical segment. At 223-385 (NRVRLQELKA…RLEAQANRNA (163 aa)) the chain is on the mitochondrial intermembrane side. The tract at residues 276–296 (GQDQGSGSPTGPSSPRGKDID) is disordered. The span at 280 to 290 (GSGSPTGPSSP) shows a compositional bias: low complexity. Residues 386–406 (ISSTLVTCVTFMATLPLLYML) traverse the membrane as a helical segment. At 407-410 (FKTS) the chain is on the mitochondrial matrix side.

As to quaternary structure, the mitochondrial potassium channel (mitoK(ATP)) forms a heteromultimer.

Its subcellular location is the mitochondrion inner membrane. The catalysed reaction is K(+)(in) = K(+)(out). Its activity is regulated as follows. Channel activity inhibited by ATP via ABCB8/MITOSUR subunit. Pore-forming subunit of the mitochondrial ATP-gated potassium channel (mitoK(ATP)). Together with ATP-binding subunit ABCB8/MITOSUR of the mitoK(ATP) channel, mediates ATP-dependent K(+) currents across the mitochondrial inner membrane. An increase in ATP intracellular levels closes the channel, inhibiting K(+) transport, whereas a decrease in ATP levels enhances K(+) uptake in the mitochondrial matrix. May contribute to the homeostatic control of cellular metabolism under stress conditions by regulating the mitochondrial matrix volume. The chain is Mitochondrial potassium channel from Rattus norvegicus (Rat).